Reading from the N-terminus, the 948-residue chain is Protocadherin alpha-2 (948 aa).

A signal peptide spans Met1–Ala22. Over Ala23–Asn697 the chain is Extracellular. Cadherin domains are found at residues Gln30–Phe133, Ala157–Phe242, Ala243–Val350, Ser351–Phe455, Ala456–Leu565, and Gly588–Ala678. 4 N-linked (GlcNAc...) asparagine glycosylation sites follow: Asn257, Asn265, Asn362, and Asn548. Residues Val698–Tyr718 traverse the membrane as a helical segment. Over Thr719–Gln948 the chain is Cytoplasmic. The stretch at Pro734–Pro737 is one PXXP 1 repeat. A 5 X 4 AA repeats of P-X-X-P region spans residues Pro734–Pro892. Disordered regions lie at residues Arg754–Asn801, Gly829–Pro854, and Lys868–Gln948. Residues Ala783–Gly795 show a composition bias toward basic and acidic residues. PXXP repeat units lie at residues Pro797–Pro800, Pro830–Pro833, Pro871–Pro874, and Pro889–Pro892. The span at Asp907–Lys921 shows a compositional bias: basic and acidic residues.

It is found in the cell membrane. Functionally, potential calcium-dependent cell-adhesion protein. May be involved in the establishment and maintenance of specific neuronal connections in the brain. This is Protocadherin alpha-2 (PCDHA2) from Homo sapiens (Human).